The sequence spans 384 residues: Signal peptide peptidase-like 3 (384 aa).

Residues 1-8 (MAEQTYSW) are Lumenal-facing. Residues 9-29 (AYSLVDSSQVSTFLISILLIV) traverse the membrane as a helical segment. At 30–73 (YGSFRSLNMDFENQDKEKDSNSSSGSFNGNSTNNSIQTIDSTQA) the chain is on the cytoplasmic side. A helical membrane pass occupies residues 74 to 94 (LFLPIGASVSLLVMFFFFDSV). A topological domain (lumenal) is located at residue Gln-95. The chain crosses the membrane as a helical span at residues 96 to 116 (VVFTICTAVLATIAFAFLLLP). The Cytoplasmic segment spans residues 117-138 (MCQYLTRPCSPQNKISFGCCGR). A helical transmembrane segment spans residues 139–159 (FTAAELLSFSLSVMLVLIWVL). Topologically, residues 160-164 (TGHWL) are lumenal. A helical membrane pass occupies residues 165 to 185 (LMDALAMGLCVAMIAFVRLPS). Residues 186–190 (LKVSC) lie on the Cytoplasmic side of the membrane. A helical transmembrane segment spans residues 191 to 211 (LLLSGLLIYDVFWVFFSAYIF). Asp-200 is a catalytic residue. At 212–262 (NSNVMVKVATQPADNPLDVLSRKLHLGPNVGRDVPRLSLPGKLVFPSSTGS) the chain is on the lumenal side. The helical transmembrane segment at 263-283 (HFSMLGIGDIVMPGLLLCFVL) threads the bilayer. Asp-271 is an active-site residue. Topologically, residues 284–311 (RYDNYKKQASGDSCGAPGPANISGRMQK) are cytoplasmic. A helical membrane pass occupies residues 312-332 (VSYFHCTLIGYFVGLLTATVA). Residues 333 to 339 (SRIHRAA) are Lumenal-facing. A helical transmembrane segment spans residues 340 to 360 (QPALLYLVPFTLLPLLTMAYL). The short motif at 341–343 (PAL) is the PAL element. Residues 361 to 384 (KGDLRRMWSEPFHSKSSSSRFLEV) are Cytoplasmic-facing.

Belongs to the peptidase A22B family. In terms of assembly, monomer. Homodimer. Interacts with STIM1 (via transmembrane region and SOAR/CAD domain); the interaction promotes the binding of STIM1 to ORAI1. Post-translationally, not glycosylated.

It localises to the endoplasmic reticulum membrane. It is found in the golgi apparatus. The protein localises to the membrane. With respect to regulation, its proteolytic activity is blocked by a signal peptide peptidase (SPP) inhibitor, (ZLL)2-ketone (ZLL) or a gamma-secretase inhibitor, LY411,575. Its function is as follows. Intramembrane-cleaving aspartic protease (I-CLiP) that cleaves type II membrane protein substrates in or close to their luminal transmembrane domain boundaries. Acts like a sheddase by mediating the proteolytic release and secretion of active site-containing ectodomains of glycan-modifiying glycosidase and glycosyltransferase enzymes such as MGAT5, B4GAT1 and B4GALT1. Plays a role in the regulation of cellular glycosylation processes. Required to link T-cell antigen receptor (TCR) and calcineurin-NFAT signaling cascades in lymphocytes by promoting the association of STIM1 and ORAI1 during store-operated calcium entry (SOCE) in a protease-independent manner. The polypeptide is Signal peptide peptidase-like 3 (Mus musculus (Mouse)).